The following is an 825-amino-acid chain: Heterogeneous nuclear ribonucleoprotein U (825 aa).

Ser-2 bears the N-acetylserine; partial mark. Ser-4 bears the Phosphoserine mark. One can recognise an SAP domain in the interval 8–42 (VKKLKVSELKEELKKRRLSDKGLKAELMERLQAAL). Residues Lys-17 and Lys-21 each carry the N6-acetyllysine modification. Residues 41 to 281 (ALDDEEAGGR…PQPPVEEEDE (241 aa)) form a disordered region. Residue Ser-59 is modified to Phosphoserine; by PLK1. The residue at position 66 (Ser-66) is a Phosphoserine. A compositionally biased stretch (low complexity) spans 72–81 (AGLEQEAAAG). Acidic residues-rich tracts occupy residues 82 to 95 (GDEE…EEEG), 120 to 134 (PMEE…ENGD), and 140 to 153 (EGED…EGAG). Residues 159–178 (GEQQPQPPATQQQQPQQQRG) are compositionally biased toward low complexity. Position 186 is an N6-acetyllysine (Lys-186). Ser-187 bears the ADP-ribosylserine mark. Residues 199-211 (APPGARQGQQQAG) are compositionally biased toward low complexity. The residue at position 215 (Lys-215) is an N6-acetyllysine. A compositionally biased stretch (basic and acidic residues) spans 233-266 (GKTEQKGGDKKRGVKRPREDHGRGYFEYIEENKY). The residue at position 255 (Arg-255) is a Citrulline. The residue at position 265 (Lys-265) is an N6-acetyllysine; alternate. Lys-265 participates in a covalent cross-link: Glycyl lysine isopeptide (Lys-Gly) (interchain with G-Cter in SUMO1); alternate. Lys-265 is covalently cross-linked (Glycyl lysine isopeptide (Lys-Gly) (interchain with G-Cter in SUMO2); alternate). Tyr-266 carries the post-translational modification Phosphotyrosine. A phosphoserine mark is found at Ser-267 and Ser-271. The 198-residue stretch at 267–464 (SRAKSPQPPV…VEFNFGQKEK (198 aa)) folds into the B30.2/SPRY domain. Thr-286 is modified (phosphothreonine). Lys-352 bears the N6-acetyllysine mark. The segment at 488 to 672 (PKGPEEKKDC…QKLLEQYKEE (185 aa)) is ATPase domain. Residue Lys-495 forms a Glycyl lysine isopeptide (Lys-Gly) (interchain with G-Cter in SUMO2) linkage. 504–511 (GLPGAGKT) is an ATP binding site. 2 positions are modified to N6-acetyllysine; alternate: Lys-516 and Lys-524. Glycyl lysine isopeptide (Lys-Gly) (interchain with G-Cter in SUMO2); alternate cross-links involve residues Lys-516 and Lys-524. Position 532 is a phosphothreonine (Thr-532). Lys-536 participates in a covalent cross-link: Glycyl lysine isopeptide (Lys-Gly) (interchain with G-Cter in SUMO2). At Lys-551 the chain carries N6-acetyllysine. Lys-565 is subject to N6-acetyllysine; alternate. Residue Lys-565 forms a Glycyl lysine isopeptide (Lys-Gly) (interchain with G-Cter in SUMO2); alternate linkage. A Glycyl lysine isopeptide (Lys-Gly) (interchain with G-Cter in SUMO2) cross-link involves residue Lys-574. Thr-582 bears the Phosphothreonine mark. Residues Lys-609 and Lys-626 each participate in a glycyl lysine isopeptide (Lys-Gly) (interchain with G-Cter in SUMO2) cross-link. An actin-binding region spans residues 611–626 (EDYKQRTQKKAEVEGK). Lys-635 carries the post-translational modification N6-acetyllysine; alternate. Lys-635 participates in a covalent cross-link: Glycyl lysine isopeptide (Lys-Gly) (interchain with G-Cter in SUMO2); alternate. Glycyl lysine isopeptide (Lys-Gly) (interchain with G-Cter in SUMO2) cross-links involve residues Lys-664 and Lys-670. Residues 671–683 (EESKKALPPEKKQ) show a composition bias toward basic and acidic residues. The interval 671 to 749 (EESKKALPPE…GGGGGGSGGI (79 aa)) is disordered. An Omega-N-methylarginine modification is found at Arg-702. Over residues 710–728 (GGFNMRGGNFRGGAPGNRG) the composition is skewed to gly residues. The RNA-binding RGG-box stretch occupies residues 714–739 (MRGGNFRGGAPGNRGGYNRRGNMPQR). Arg-715, Arg-720, and Arg-727 each carry asymmetric dimethylarginine. Arg-733 and Arg-739 each carry asymmetric dimethylarginine; alternate. Omega-N-methylarginine; alternate is present on residues Arg-733 and Arg-739. Arg-739 is modified (dimethylated arginine; in A2780 ovarian carcinoma cell line). The segment covering 739–749 (RGGGGGGSGGI) has biased composition (gly residues). Arg-755 and Arg-762 each carry asymmetric dimethylarginine. Positions 769 to 799 (GNYNRGGMPNRGNYNQNFRGRGNNRGYKNQS) are disordered. Low complexity predominate over residues 778-799 (NRGNYNQNFRGRGNNRGYKNQS). Lys-814 carries the N6-acetyllysine; alternate modification. A Glycyl lysine isopeptide (Lys-Gly) (interchain with G-Cter in SUMO2); alternate cross-link involves residue Lys-814.

As to quaternary structure, oligomer (via ATPase domain and RNA-binding RGG-box region); oligomerization occurs upon ATP-binding in a chromatin-associated RNAs (caRNAs)- and transcription-dependent manner and is required for chromatin decompaction. ATP hydrolysis is required to cycle from an oligomeric to monomeric state to compact chromatin. Component of the coding region determinant (CRD)-mediated complex, composed of DHX9, HNRNPU, IGF2BP1, SYNCRIP and YBX1. Identified in the spliceosome C complex. Identified in a IGF2BP1-dependent mRNP granule complex containing untranslated mRNAs. Associates with heterogeneous nuclear ribonucleoprotein (hnRNP) particles. Associates (via middle region) with the C-terminal domain (CTD) RNA polymerase II (Pol II) holoenzyme; this association occurs in a RNA-independent manner. Associates (via middle region) with the core-TFIIH basal transcription factor complex; this association inhibits the CTD phosphorylation of RNA polymerase II holoenzyme by down-regulating TFIIH kinase activity. Associates with the telomerase holoenzyme complex. Associates with spindle microtubules (MTs) in a TPX2-dependent manner. Interacts (via C-terminus) with actin; this interaction is direct and mediates association with the phosphorylated CTD of RNA polymerase II and is disrupted in presence of the long non-coding H19 RNA. Interacts with AURKA. Interacts (via C-terminus) with CBX5; this interaction is, at least in part, RNA-dependent. Interacts with CR2. Interacts with CRY1. Interacts (via C-terminus) with EP300; this interaction enhances DNA-binding to nuclear scaffold/matrix attachment region (S/MAR) elements. Interacts with ERBB4. Interacts with GEMIN5. Interacts with IGF2BP1. Interacts with IGF2BP2 and IGF2BP3. Interacts with NCL; this interaction occurs during mitosis. Interacts (via C-terminus) with NR3C1 (via C-terminus). Interacts with PLK1; this interaction induces phosphorylation of HNRNPU at Ser-59 in mitosis. Interacts with POU3F4. Interacts with SMARCA4; this interaction occurs in embryonic stem cells and stimulates global Pol II-mediated transcription. Interacts (via C-terminus) with TOP2A; this interaction protects the topoisomerase TOP2A from degradation and positively regulates the relaxation of supercoiled DNA by TOP2A in a RNA-dependent manner. Interacts with TPX2; this interaction recruits HNRNPU to spindle microtubules (MTs). Interacts with UBQLN2. Interacts (via RNA-binding RGG-box region) with ZBTB7B; the interaction facilitates the recruitment of long non-coding RNA Blnc1 by ZBTB7B. Interacts with ERCC6. (Microbial infection) Interacts with HIV-1 protein Rev. In terms of processing, cleaved at Asp-100 by CASP3 during T-cell apoptosis, resulting in a loss of DNA- and chromatin-binding activities. Post-translationally, extensively phosphorylated. Phosphorylated on Ser-59 by PLK1 and dephosphorylated by protein phosphatase 2A (PP2A) in mitosis. Arg-739 is dimethylated, probably to asymmetric dimethylarginine. Arg-733 is dimethylated, probably to asymmetric dimethylarginine. In terms of processing, citrullinated by PADI4. In terms of tissue distribution, widely expressed.

The protein localises to the nucleus. The protein resides in the nucleus matrix. It is found in the chromosome. Its subcellular location is the nucleus speckle. It localises to the cytoplasm. The protein localises to the cytoskeleton. The protein resides in the microtubule organizing center. It is found in the centrosome. Its subcellular location is the centromere. It localises to the kinetochore. The protein localises to the spindle. The protein resides in the spindle pole. It is found in the midbody. Its subcellular location is the cell surface. It localises to the cytoplasmic granule. Its function is as follows. DNA- and RNA-binding protein involved in several cellular processes such as nuclear chromatin organization, telomere-length regulation, transcription, mRNA alternative splicing and stability, Xist-mediated transcriptional silencing and mitotic cell progression. Plays a role in the regulation of interphase large-scale gene-rich chromatin organization through chromatin-associated RNAs (caRNAs) in a transcription-dependent manner, and thereby maintains genomic stability. Required for the localization of the long non-coding Xist RNA on the inactive chromosome X (Xi) and the subsequent initiation and maintenance of X-linked transcriptional gene silencing during X-inactivation. Plays a role as a RNA polymerase II (Pol II) holoenzyme transcription regulator. Promotes transcription initiation by direct association with the core-TFIIH basal transcription factor complex for the assembly of a functional pre-initiation complex with Pol II in a actin-dependent manner. Blocks Pol II transcription elongation activity by inhibiting the C-terminal domain (CTD) phosphorylation of Pol II and dissociates from Pol II pre-initiation complex prior to productive transcription elongation. Positively regulates CBX5-induced transcriptional gene silencing and retention of CBX5 in the nucleus. Negatively regulates glucocorticoid-mediated transcriptional activation. Key regulator of transcription initiation and elongation in embryonic stem cells upon leukemia inhibitory factor (LIF) signaling. Involved in the long non-coding RNA H19-mediated Pol II transcriptional repression. Participates in the circadian regulation of the core clock component BMAL1 transcription. Plays a role in the regulation of telomere length. Plays a role as a global pre-mRNA alternative splicing modulator by regulating U2 small nuclear ribonucleoprotein (snRNP) biogenesis. Plays a role in mRNA stability. Component of the CRD-mediated complex that promotes MYC mRNA stabilization. Enhances the expression of specific genes, such as tumor necrosis factor TNFA, by regulating mRNA stability, possibly through binding to the 3'-untranslated region (UTR). Plays a role in mitotic cell cycle regulation. Involved in the formation of stable mitotic spindle microtubules (MTs) attachment to kinetochore, spindle organization and chromosome congression. Phosphorylation at Ser-59 by PLK1 is required for chromosome alignement and segregation and progression through mitosis. Also contributes to the targeting of AURKA to mitotic spindle MTs. Binds to double- and single-stranded DNA and RNA, poly(A), poly(C) and poly(G) oligoribonucleotides. Binds to chromatin-associated RNAs (caRNAs). Associates with chromatin to scaffold/matrix attachment region (S/MAR) elements in a chromatin-associated RNAs (caRNAs)-dependent manner. Binds to the Xist RNA. Binds the long non-coding H19 RNA. Binds to SMN1/2 pre-mRNAs at G/U-rich regions. Binds to small nuclear RNAs (snRNAs). Binds to the 3'-UTR of TNFA mRNA. Binds (via RNA-binding RGG-box region) to the long non-coding Xist RNA; this binding is direct and bridges the Xist RNA and the inactive chromosome X (Xi). Also negatively regulates embryonic stem cell differentiation upon LIF signaling. Required for embryonic development. Binds to brown fat long non-coding RNA 1 (Blnc1); facilitates the recruitment of Blnc1 by ZBTB7B required to drive brown and beige fat development and thermogenesis. Functionally, (Microbial infection) Negatively regulates immunodeficiency virus type 1 (HIV-1) replication by preventing the accumulation of viral mRNA transcripts in the cytoplasm. The chain is Heterogeneous nuclear ribonucleoprotein U from Homo sapiens (Human).